The primary structure comprises 577 residues: Arginine--tRNA ligase (577 aa).

The short motif at 123–133 (PNLAKEMHVGH) is the 'HIGH' region element.

This sequence belongs to the class-I aminoacyl-tRNA synthetase family. In terms of assembly, monomer.

It is found in the cytoplasm. The catalysed reaction is tRNA(Arg) + L-arginine + ATP = L-arginyl-tRNA(Arg) + AMP + diphosphate. This is Arginine--tRNA ligase from Marinomonas sp. (strain MWYL1).